The primary structure comprises 546 residues: NAD(P)H-quinone oxidoreductase chain 4 (546 aa).

The next 14 membrane-spanning stretches (helical) occupy residues 17-37 (VPWLSLSILVPIVGALLVPFI), 48-68 (WYALGVTLITFLITVSAYLNG), 103-123 (LILLTSFITSLACLAAWPVSF), 127-147 (LFYFLLLAMDGGQIAVFAVQD), 149-169 (LLFFLAWELELIPVYLLLAIW), 181-201 (FILYTAGSSLFILLAALAMGF), 222-242 (GFQLLCYAGLLIAFGVKLPIV), 256-276 (TAPVHMLLAGILLKMGGYALL), 290-310 (FAPLLIVLGVVNIIYAALTSF), 327-347 (MGFVLIGVGSFSALGTSGAML), 348-368 (QMISHGLIGASLFFLVGATYD), 389-409 (FALWTVCALASLALPGMSGFV), 430-450 (VVICCLAAVGVILTPIYLLSM), and 477-497 (VYIIGCLLVPIIGIGLYPRLM).

Belongs to the complex I subunit 4 family.

Its subcellular location is the cellular thylakoid membrane. It carries out the reaction a plastoquinone + NADH + (n+1) H(+)(in) = a plastoquinol + NAD(+) + n H(+)(out). The catalysed reaction is a plastoquinone + NADPH + (n+1) H(+)(in) = a plastoquinol + NADP(+) + n H(+)(out). NDH-1 shuttles electrons from NAD(P)H, via FMN and iron-sulfur (Fe-S) centers, to quinones in the respiratory chain. The immediate electron acceptor for the enzyme in this species is believed to be plastoquinone. Couples the redox reaction to proton translocation (for every two electrons transferred, four hydrogen ions are translocated across the cytoplasmic membrane), and thus conserves the redox energy in a proton gradient. The protein is NAD(P)H-quinone oxidoreductase chain 4 of Parasynechococcus marenigrum (strain WH8102).